The following is a 176-amino-acid chain: Adenine phosphoribosyltransferase (176 aa).

The protein belongs to the purine/pyrimidine phosphoribosyltransferase family. In terms of assembly, homodimer.

Its subcellular location is the cytoplasm. It catalyses the reaction AMP + diphosphate = 5-phospho-alpha-D-ribose 1-diphosphate + adenine. The protein operates within purine metabolism; AMP biosynthesis via salvage pathway; AMP from adenine: step 1/1. Its function is as follows. Catalyzes a salvage reaction resulting in the formation of AMP, that is energically less costly than de novo synthesis. The polypeptide is Adenine phosphoribosyltransferase (Roseobacter denitrificans (strain ATCC 33942 / OCh 114) (Erythrobacter sp. (strain OCh 114))).